The primary structure comprises 296 residues: MNLQTMIRTLQDYWSEQGCIMLQSYDVEKGAGTMSPYTFLKAIGPEPWKAGYVEPSRRPADGRYGENPNRLFQHHQFQVVMKPSPDNIQELYLGSLEKLGINPLEHDIRFVEDNWENPSLGCAGLGWEVWLDGMEITQFTYFQQVGGLECFPVTSEITYGVERLASYIQDKENVFDLEWTEGISYRDIFFQAEFENSTYAFETSNTDMLLTLFDTYEREATRQMQDGLVFPAYDYVLKCSHTFNLLDARGVVSVTERAQYIGRIRNLARRIAKTFYESREKLGFPLLKEEGGKRHE.

This sequence belongs to the class-II aminoacyl-tRNA synthetase family. In terms of assembly, tetramer of two alpha and two beta subunits.

It localises to the cytoplasm. It catalyses the reaction tRNA(Gly) + glycine + ATP = glycyl-tRNA(Gly) + AMP + diphosphate. This chain is Glycine--tRNA ligase alpha subunit, found in Listeria monocytogenes serotype 4a (strain HCC23).